We begin with the raw amino-acid sequence, 628 residues long: DNA ligase (628 aa).

NAD(+) is bound by residues 36–40 (DVEYD), 85–86 (SL), and E117. The N6-AMP-lysine intermediate role is filled by K119. Residues R140, E174, K309, and K333 each coordinate NAD(+). Residues C427, C430, C446, and C452 each coordinate Zn(2+).

Belongs to the NAD-dependent DNA ligase family. LigA subfamily. It depends on Mg(2+) as a cofactor. Requires Mn(2+) as cofactor.

The catalysed reaction is NAD(+) + (deoxyribonucleotide)n-3'-hydroxyl + 5'-phospho-(deoxyribonucleotide)m = (deoxyribonucleotide)n+m + AMP + beta-nicotinamide D-nucleotide.. In terms of biological role, DNA ligase that catalyzes the formation of phosphodiester linkages between 5'-phosphoryl and 3'-hydroxyl groups in double-stranded DNA using NAD as a coenzyme and as the energy source for the reaction. It is essential for DNA replication and repair of damaged DNA. The protein is DNA ligase of Tropheryma whipplei (strain TW08/27) (Whipple's bacillus).